The chain runs to 180 residues: Protein SPMIP9 (180 aa).

In terms of assembly, microtubule inner protein component of sperm flagellar doublet microtubules. In terms of tissue distribution, testis-specific. Detected in the germ cell lineage at all stages.

The protein localises to the nucleus. Its subcellular location is the cytoplasm. The protein resides in the cytoskeleton. It localises to the flagellum axoneme. Functionally, microtubule inner protein (MIP) part of the dynein-decorated doublet microtubules (DMTs) in flagella axoneme. The chain is Protein SPMIP9 from Homo sapiens (Human).